The primary structure comprises 400 residues: Probable vacuolar protease A (400 aa).

An N-terminal signal peptide occupies residues Met1–Ala18. The propeptide at Lys19 to Glu72 is activation peptide. The Peptidase A1 domain occupies Tyr87–Ala397. The active site involves Asp105. Cys118 and Cys123 are disulfide-bonded. A glycan (N-linked (GlcNAc...) asparagine) is linked at Asn140. Asp289 is an active-site residue. Cys323 and Cys356 form a disulfide bridge. Asn340 carries an N-linked (GlcNAc...) asparagine glycan.

Belongs to the peptidase A1 family.

Its subcellular location is the vacuole lumen. The protein resides in the secreted. The enzyme catalyses Hydrolysis of proteins with broad specificity for peptide bonds. Cleaves -Leu-Leu-|-Val-Tyr- bond in a synthetic substrate. Does not act on esters of Tyr or Arg.. Vacuolar aspartic endopeptidase which is probably also secreted and contributes to virulence. The sequence is that of Probable vacuolar protease A (PEP2) from Trichophyton verrucosum (strain HKI 0517).